A 350-amino-acid chain; its full sequence is Secreted effector protein PipB2 (350 aa).

4 consecutive Pentapeptide repeat domains span residues 162–201 (ANLT…NLSG), 202–241 (ASLG…SLLG), 247–286 (CNCS…IMEG), and 287–326 (AVLT…TLTD).

Interacts with the host kinesin light chain (KLC), a subunit of the kinesin-1 motor complex.

Its subcellular location is the secreted. The protein resides in the host membrane. Effector proteins function to alter host cell physiology and promote bacterial survival in host tissues. Involved in the reorganization of late endosome/lysosome (LE/Lys) compartments in mammalian cells. Necessary and sufficient to link kinesin-1 onto the Salmonella-containing vacuole (SCV) membrane. Required for centrifugal extension of lysosomal glycoprotein-rich membrane tubules, known as Salmonella-induced filaments (Sifs), away from the SCV and toward the cell periphery. Required for virulence, but not for intracellular survival and replication in phagocytic cells. The polypeptide is Secreted effector protein PipB2 (pipB2) (Salmonella typhi).